A 98-amino-acid chain; its full sequence is UPF0251 protein Sputcn32_0687 (98 aa).

It belongs to the UPF0251 family.

The sequence is that of UPF0251 protein Sputcn32_0687 from Shewanella putrefaciens (strain CN-32 / ATCC BAA-453).